Consider the following 362-residue polypeptide: Peptide chain release factor 1 (362 aa).

N5-methylglutamine is present on Gln237.

Belongs to the prokaryotic/mitochondrial release factor family. In terms of processing, methylated by PrmC. Methylation increases the termination efficiency of RF1.

It localises to the cytoplasm. Peptide chain release factor 1 directs the termination of translation in response to the peptide chain termination codons UAG and UAA. The polypeptide is Peptide chain release factor 1 (Aeromonas salmonicida (strain A449)).